The sequence spans 342 residues: Endolytic peptidoglycan transglycosylase RlpA (342 aa).

The signal sequence occupies residues 1–26; sequence MSKRVRSSLILPAVCGLGLAAVLLSS. Cys-27 carries N-palmitoyl cysteine lipidation. Cys-27 carries the S-diacylglycerol cysteine lipid modification. An SPOR domain is found at 261 to 342; that stretch reads SLPADGLYLQ…LGQPTLVRPD (82 aa).

Belongs to the RlpA family.

The protein resides in the cell membrane. Functionally, lytic transglycosylase with a strong preference for naked glycan strands that lack stem peptides. This is Endolytic peptidoglycan transglycosylase RlpA from Pseudomonas aeruginosa (strain ATCC 15692 / DSM 22644 / CIP 104116 / JCM 14847 / LMG 12228 / 1C / PRS 101 / PAO1).